The sequence spans 374 residues: Chaperone protein DnaJ (374 aa).

The J domain maps to 5–70; it reads CYYEILNVSK…GKRSRYDQFG (66 aa). A CR-type zinc finger spans residues 130–207; sequence GVEKEINIPR…CYGSGKIKKQ (78 aa). Residues Cys-143, Cys-146, Cys-159, Cys-162, Cys-181, Cys-184, Cys-195, and Cys-198 each coordinate Zn(2+). 4 CXXCXGXG motif repeats span residues 143 to 150, 159 to 166, 181 to 188, and 195 to 202; these read CDSCDGTG, CHACHGQG, CPVCNGTG, and CDDCYGSG.

This sequence belongs to the DnaJ family. Homodimer. It depends on Zn(2+) as a cofactor.

It is found in the cytoplasm. In terms of biological role, participates actively in the response to hyperosmotic and heat shock by preventing the aggregation of stress-denatured proteins and by disaggregating proteins, also in an autonomous, DnaK-independent fashion. Unfolded proteins bind initially to DnaJ; upon interaction with the DnaJ-bound protein, DnaK hydrolyzes its bound ATP, resulting in the formation of a stable complex. GrpE releases ADP from DnaK; ATP binding to DnaK triggers the release of the substrate protein, thus completing the reaction cycle. Several rounds of ATP-dependent interactions between DnaJ, DnaK and GrpE are required for fully efficient folding. Also involved, together with DnaK and GrpE, in the DNA replication of plasmids through activation of initiation proteins. The protein is Chaperone protein DnaJ of Francisella philomiragia subsp. philomiragia (strain ATCC 25017 / CCUG 19701 / FSC 153 / O#319-036).